Consider the following 147-residue polypeptide: uncharacterized protein (147 aa).

Transmembrane regions (helical) follow at residues 42-62 and 64-84; these read WASL…SPEP and LILQ…ATAF.

It is found in the cell membrane. This is an uncharacterized protein from Bacillus subtilis (strain 168).